Here is a 243-residue protein sequence, read N- to C-terminus: Small ribosomal subunit protein uS3 (243 aa).

Residues 39–110 (IRTFIEKKYG…QVRINVVEVE (72 aa)) enclose the KH type-2 domain. Residues 216–243 (QTIPVGANPKRKASRRPQQFEDRSNENS) form a disordered region. Residues 233–243 (QQFEDRSNENS) are compositionally biased toward basic and acidic residues.

Belongs to the universal ribosomal protein uS3 family. As to quaternary structure, part of the 30S ribosomal subunit. Forms a tight complex with proteins S10 and S14.

Binds the lower part of the 30S subunit head. Binds mRNA in the 70S ribosome, positioning it for translation. The chain is Small ribosomal subunit protein uS3 from Prochlorococcus marinus (strain MIT 9215).